We begin with the raw amino-acid sequence, 453 residues long: uncharacterized protein (453 aa).

An N-terminal signal peptide occupies residues 1-23 (MFLLQRFFIYGLFLACFYTTVFG). Over 24–137 (EKHFEAEEYR…EKQFSYSSGT (114 aa)) the chain is Lumenal. The helical transmembrane segment at 138–158 (NGILATFLTAIPPNIFILLVP) threads the bilayer. The Cytoplasmic segment spans residues 159 to 165 (KSFDTSM). The chain crosses the membrane as a helical span at residues 166-186 (LNLFVAVSAGSLLGDVFLQLL). Residues 187 to 194 (PTVYSTNG) lie on the Lumenal side of the membrane. The chain crosses the membrane as a helical span at residues 195–215 (GDFPASSVYSILIGALVFFLM). Over 216 to 358 (DKGIRILIHE…LRNGYTKSQV (143 aa)) the chain is Cytoplasmic. Basic and acidic residues predominate over residues 229–238 (SLSKPKKDGE). The segment at 229-278 (SLSKPKKDGEETSSVNKPSASSTQTDVKGVEGLRKRNVKDDQNSKGHEPD) is disordered. The segment covering 240–254 (TSSVNKPSASSTQTD) has biased composition (polar residues). The span at 256–278 (KGVEGLRKRNVKDDQNSKGHEPD) shows a compositional bias: basic and acidic residues. Residues 359 to 379 (LVLQMITMVTGLLGAIVATYI) traverse the membrane as a helical segment. The Lumenal portion of the chain corresponds to 380 to 399 (YTASSSSSPYGSFLLQLEDK). A helical membrane pass occupies residues 400-420 (LLPFTAGGFLYIAYLGVFPEL). The Cytoplasmic portion of the chain corresponds to 421 to 432 (LEINLSKGKLGN). Residues 433–453 (MIYTALYMMFIVGGFSFLYYV) form a helical membrane-spanning segment.

This sequence belongs to the ZIP transporter (TC 2.A.5) family. KE4/Catsup subfamily.

Its subcellular location is the endoplasmic reticulum membrane. This is an uncharacterized protein from Schizosaccharomyces pombe (strain 972 / ATCC 24843) (Fission yeast).